A 798-amino-acid chain; its full sequence is Galactinol--sucrose galactosyltransferase (798 aa).

The protein belongs to the glycosyl hydrolases 36 family.

The enzyme catalyses alpha-D-galactosyl-(1-&gt;3)-1D-myo-inositol + sucrose = raffinose + myo-inositol. Inhibited by 1-deoxygalactonojirimycin. Not inhibited by stachyose. Strong inhibition of the hydrolytic activity by sucrose. Its function is as follows. Transglycosidase operating by a ping-pong reaction mechanism. Involved in the synthesis of raffinose, a major soluble carbohydrate in seeds, roots and tubers. Able to utilize D-ononitol and D-pinitol as acceptors. May also act as a glycoside hydrolase. The protein is Galactinol--sucrose galactosyltransferase (RFS) of Pisum sativum (Garden pea).